The primary structure comprises 269 residues: 4-hydroxy-tetrahydrodipicolinate reductase (269 aa).

Residues 11–16 (GASGRM) and E37 each bind NAD(+). Residue R38 coordinates NADP(+). NAD(+)-binding positions include 101–103 (GTT) and 125–128 (AGNM). The Proton donor/acceptor role is filled by H158. (S)-2,3,4,5-tetrahydrodipicolinate is bound at residue H159. The Proton donor role is filled by K162. 168–169 (GT) serves as a coordination point for (S)-2,3,4,5-tetrahydrodipicolinate.

The protein belongs to the DapB family.

The protein resides in the cytoplasm. The catalysed reaction is (S)-2,3,4,5-tetrahydrodipicolinate + NAD(+) + H2O = (2S,4S)-4-hydroxy-2,3,4,5-tetrahydrodipicolinate + NADH + H(+). The enzyme catalyses (S)-2,3,4,5-tetrahydrodipicolinate + NADP(+) + H2O = (2S,4S)-4-hydroxy-2,3,4,5-tetrahydrodipicolinate + NADPH + H(+). It functions in the pathway amino-acid biosynthesis; L-lysine biosynthesis via DAP pathway; (S)-tetrahydrodipicolinate from L-aspartate: step 4/4. Catalyzes the conversion of 4-hydroxy-tetrahydrodipicolinate (HTPA) to tetrahydrodipicolinate. The protein is 4-hydroxy-tetrahydrodipicolinate reductase of Cereibacter sphaeroides (strain KD131 / KCTC 12085) (Rhodobacter sphaeroides).